A 347-amino-acid chain; its full sequence is MDLYDYMAPTTTTEEDDEEGYEKLKEEMGSALNNLTNGKFGLFWNSMKEKSENFLDDTKGKASSGMQQLKSQLEENIPVNSAMENLRKVEETAGSFWSGFGSTVNGFLDQALQISPKEDDVSTPTHEASSSVFLNRHERQLLELVQNENTFTQIISEPSHGITFESWEKEISIDGKTEEISLLLEEYPDLRKQMESLVPSEVSYDDFWKRFFWHKEVVQPIKAIQSGNDEEEIFSWGDERSDEEESDNEQVNDEKKQSSEEDTTENNSAAEVIDETVNDLESAVSKGLQIETQPASHDGEVDGEVKEEEENKVSSSSNIEASQSSLEVKDEANRKVDDDDEDDDDWE.

Threonine 123 and threonine 125 each carry phosphothreonine. A BSD domain is found at 167–219 (WEKEISIDGKTEEISLLLEEYPDLRKQMESLVPSEVSYDDFWKRFFWHKEVVQ). A disordered region spans residues 229 to 347 (DEEEIFSWGD…DDDEDDDDWE (119 aa)). Serine 235, serine 241, and serine 246 each carry phosphoserine. The span at 240-251 (RSDEEESDNEQV) shows a compositional bias: acidic residues. A compositionally biased stretch (basic and acidic residues) spans 297-312 (HDGEVDGEVKEEEENK). Residues 313–325 (VSSSSNIEASQSS) are compositionally biased toward low complexity. Positions 327 to 337 (EVKDEANRKVD) are enriched in basic and acidic residues. Acidic residues predominate over residues 338-347 (DDDEDDDDWE).

The protein localises to the cytoplasm. In Schizosaccharomyces pombe (strain 972 / ATCC 24843) (Fission yeast), this protein is BSD domain-containing protein C22A12.14c.